The sequence spans 407 residues: GTPase Obg (407 aa).

An Obg domain is found at 1-159 (MKFVDEVSIR…RDLKLEMKVL (159 aa)). The interval 128 to 148 (TRFKSSTNRAPRQTTPGKPGE) is disordered. Residues 129–143 (RFKSSTNRAPRQTTP) are compositionally biased toward polar residues. In terms of domain architecture, OBG-type G spans 160–333 (ADVGLLGLPN…LTRDIMRYLE (174 aa)). Residues 166 to 173 (GLPNAGKS), 191 to 195 (FTTLV), 213 to 216 (DIPG), 283 to 286 (NKCD), and 314 to 316 (SAI) each bind GTP. Serine 173 and threonine 193 together coordinate Mg(2+). Positions 376–407 (SGVKSVHDIGDDDWDEEDVDDEDGPEIIYVRD) are disordered. Residues 385 to 400 (GDDDWDEEDVDDEDGP) show a composition bias toward acidic residues.

This sequence belongs to the TRAFAC class OBG-HflX-like GTPase superfamily. OBG GTPase family. As to quaternary structure, monomer. Requires Mg(2+) as cofactor.

It is found in the cytoplasm. In terms of biological role, an essential GTPase which binds GTP, GDP and possibly (p)ppGpp with moderate affinity, with high nucleotide exchange rates and a fairly low GTP hydrolysis rate. Plays a role in control of the cell cycle, stress response, ribosome biogenesis and in those bacteria that undergo differentiation, in morphogenesis control. This is GTPase Obg from Pseudomonas fluorescens (strain Pf0-1).